Consider the following 91-residue polypeptide: Teretoxin Tan22.13 (91 aa).

The signal sequence occupies residues 1–21 (MKVQILFALMMVLVTLCLGQK). A propeptide spanning residues 22–24 (MQR) is cleaved from the precursor.

This sequence belongs to the teretoxin C (TC) superfamily. In terms of processing, contains 4 disulfide bonds. As to expression, expressed by the venom duct.

It localises to the secreted. In Terebra anilis (Auger snail), this protein is Teretoxin Tan22.13.